Consider the following 512-residue polypeptide: Protein maph-9 (512 aa).

Disordered regions lie at residues isoleucine 24–phenylalanine 103, aspartate 168–lysine 386, and glycine 481–arginine 512. Composition is skewed to low complexity over residues threonine 30 to glycine 39 and serine 78 to alanine 95. Basic and acidic residues predominate over residues threonine 178 to lysine 200. The span at proline 230–lysine 239 shows a compositional bias: polar residues. Basic and acidic residues-rich tracts occupy residues lysine 260–serine 302 and valine 310–lysine 386. Positions lysine 267 to arginine 429 form a coiled coil. Residues proline 502–arginine 512 show a composition bias toward polar residues.

As to expression, expressed in amphid and phasmid ciliated neurons.

It is found in the cell projection. The protein localises to the cilium. It localises to the cytoplasm. Its subcellular location is the cytoskeleton. The protein resides in the cilium axoneme. This Caenorhabditis elegans protein is Protein maph-9.